The following is a 536-amino-acid chain: Caspase recruitment domain-containing protein 9 (536 aa).

Serine 2 carries the phosphoserine modification. Residues aspartate 3, cysteine 10, and histidine 73 each coordinate Zn(2+). One can recognise a CARD domain in the interval 6 to 98 (NDDECWSTLE…QLYRKVTGKE (93 aa)). The linker stretch occupies residues 99-116 (PARVFSMIIDASGESGLT). Residues 117–272 (QLLMTEVMKL…ELQVSVQEGK (156 aa)) are a coiled coil. A Glycyl lysine isopeptide (Lys-Gly) (interchain with G-Cter in ubiquitin) cross-link involves residue lysine 125. Position 231 is a phosphothreonine; by PKC/PRKCD (threonine 231). Position 277 is a phosphoserine (serine 277). Positions 303–415 (SLRKDLRQAE…LLAAEGRLKQ (113 aa)) form a coiled coil. Residues serine 424, serine 425, serine 431, serine 451, serine 461, serine 483, and serine 498 each carry the phosphoserine modification. The interval 425-451 (SDLEDSSPRNSQELSLPQDLEEDAQLS) is disordered. Residues 476 to 536 (LTHGMGPSSS…GSDNTDTEGS (61 aa)) are disordered. Residues 487 to 502 (PPEKERRRLKESFENY) show a composition bias toward basic and acidic residues. Residues threonine 531 and threonine 533 each carry the phosphothreonine; by CK2 modification.

Monomer. Homodimer; homodimerization is mediated by the CARD domain which forms an extensive interaction with the adjacent linker and coiled-coil regions; leads to an autoinhibited state. Homomultimer; polymerizes following activation, forming a nucleating helical template that seeds BCL10-filament formation via a CARD-CARD interaction. Interacts (via CARD domain) with BCL10 (via CARD domain); interaction takes place following CARD9 activation and polymerization, leading to the formation of a filamentous CBM complex assembly. Component of a CBM complex (CARD9-BCL10, MALT1), composed of CARD9, BCL10 and MALT1. Interacts with RASGRF1. Interacts with NOD2 (via NACHT domain); interaction is direct. Interacts with RIPK2. Interacts with VHL; without leading to protein degradation. Post-translationally, phosphorylated at Thr-231 by PRKCD downstream of C-type lectin receptors activation: phosphorylation promotes interaction with BCL10, followed by activation of NF-kappa-B and MAP kinase p38 pathways. Phosphorylated at Thr-531 and Thr-531 by CK2 following interaction with VHL, leading to inhibit the ability to activate NF-kappa-B. In terms of processing, ubiquitinated at Lys-125 via 'Lys-27'-linked ubiquitin by TRIM62 downstream of C-type lectin receptors activation; leading to CARD9 activation, followed by activation of NF-kappa-B and MAP kinase p38 pathways. Deubiquitinated at Lys-125 by USP15, inhibiting CARD9. Specifically expressed in myeloid cells. Not expressed in non-lymphoid organs.

It localises to the cytoplasm. Maintained in an autoinhibited state via homodimerization in which the CARD domain forms an extensive interaction with the adjacent linker and coiled-coil regions. Activation downstream of C-type lectin receptors, by phosphorylation by PRKCD and/or ubiquitination by TRIM62, triggers disruption of the CARD domain-coiled coil interface, CARD9 homooligomerization and BCL10 recruitment, followed by activation of NF-kappa-B and MAP kinase p38 pathways. Zinc-binding inhibits activation by stabilizing the CARD ground-state conformation and restricting its capacity to form BCL10-nucleating filaments. Its function is as follows. Adapter protein that plays a key role in innate immune response against fungi by forming signaling complexes downstream of C-type lectin receptors. CARD9-mediated signals are essential for antifungal immunity against a subset of fungi from the phylum Ascomycota. Transduces signals in myeloid cells downstream of C-type lectin receptors CLEC7A (dectin-1), CLEC6A (dectin-2) and CLEC4E (Mincle), which detect pathogen-associated molecular pattern metabolites (PAMPs), such as fungal carbohydrates, and trigger CARD9 activation. Upon activation, CARD9 homooligomerizes to form a nucleating helical template that recruits BCL10 via CARD-CARD interaction, thereby promoting polymerization of BCL10 and subsequent recruitment of MALT1: this leads to activation of NF-kappa-B and MAP kinase p38 (MAPK11, MAPK12, MAPK13 and/or MAPK14) pathways which stimulate expression of genes encoding pro-inflammatory cytokines and chemokines. CARD9 signaling in antigen-presenting cells links innate sensing of fungi to the activation of adaptive immunity and provides a cytokine milieu that induces the development and subsequent of interleukin 17-producing T helper (Th17) cells. Also involved in activation of myeloid cells via classical ITAM-associated receptors and TLR: required for TLR-mediated activation of MAPK, while it is not required for TLR-induced activation of NF-kappa-B. CARD9 can also be engaged independently of BCL10: forms a complex with RASGRF1 downstream of C-type lectin receptors, which recruits and activates HRAS, leading to ERK activation and the production of cytokines. Acts as an important regulator of the intestinal commensal fungi (mycobiota) component of the gut microbiota. Plays an essential role in antifungal immunity against dissemination of gut fungi: acts by promoting induction of antifungal IgG antibodies response in CX3CR1(+) macrophages to confer protection against disseminated C.albicans or C.auris infection. Also mediates immunity against other pathogens, such as certain bacteria, viruses and parasites; CARD9 signaling is however redundant with other innate immune responses. In response to L.monocytogenes infection, required for the production of inflammatory cytokines activated by intracellular peptidoglycan: acts by connecting NOD2 recognition of peptidoglycan to downstream activation of MAP kinases (MAPK) without activating NF-kappa-B. This chain is Caspase recruitment domain-containing protein 9, found in Mus musculus (Mouse).